The chain runs to 120 residues: Large ribosomal subunit protein uL18 (120 aa).

This sequence belongs to the universal ribosomal protein uL18 family. In terms of assembly, part of the 50S ribosomal subunit; part of the 5S rRNA/L5/L18/L25 subcomplex. Contacts the 5S and 23S rRNAs.

This is one of the proteins that bind and probably mediate the attachment of the 5S RNA into the large ribosomal subunit, where it forms part of the central protuberance. The protein is Large ribosomal subunit protein uL18 of Gluconobacter oxydans (strain 621H) (Gluconobacter suboxydans).